The sequence spans 438 residues: Proline--tRNA ligase (438 aa).

Belongs to the class-II aminoacyl-tRNA synthetase family. ProS type 2 subfamily. In terms of assembly, homodimer.

Its subcellular location is the cytoplasm. The enzyme catalyses tRNA(Pro) + L-proline + ATP = L-prolyl-tRNA(Pro) + AMP + diphosphate. Its function is as follows. Catalyzes the attachment of proline to tRNA(Pro) in a two-step reaction: proline is first activated by ATP to form Pro-AMP and then transferred to the acceptor end of tRNA(Pro). This is Proline--tRNA ligase from Rhodopseudomonas palustris (strain TIE-1).